Consider the following 606-residue polypeptide: Threonine dehydratase 1 biosynthetic, chloroplastic (606 aa).

The residue at position 154 (Lys154) is an N6-(pyridoxal phosphate)lysine. ACT-like domains lie at 432–504 (AVLA…NLTD) and 526–597 (LLCR…MESL).

The protein belongs to the serine/threonine dehydratase family. It depends on pyridoxal 5'-phosphate as a cofactor. In terms of tissue distribution, expressed constitutively in all tissues examined including root, stem, petiole, leaf, immature flower bud, unopened flower and opened flower with the highest expression in opened flower and lowest in leaf.

The protein resides in the plastid. It is found in the chloroplast. It carries out the reaction L-threonine = 2-oxobutanoate + NH4(+). It participates in amino-acid biosynthesis; L-isoleucine biosynthesis; 2-oxobutanoate from L-threonine: step 1/1. Strongly inhibited by 1 mM isoleucine. Its function is as follows. Has a housekeeping role in isoleucine biosynthesis. This Solanum lycopersicum (Tomato) protein is Threonine dehydratase 1 biosynthetic, chloroplastic.